The following is a 353-amino-acid chain: Nicotinate-nucleotide--dimethylbenzimidazole phosphoribosyltransferase (353 aa).

Glu-318 functions as the Proton acceptor in the catalytic mechanism.

It belongs to the CobT family.

It carries out the reaction 5,6-dimethylbenzimidazole + nicotinate beta-D-ribonucleotide = alpha-ribazole 5'-phosphate + nicotinate + H(+). Its pathway is nucleoside biosynthesis; alpha-ribazole biosynthesis; alpha-ribazole from 5,6-dimethylbenzimidazole: step 1/2. Catalyzes the synthesis of alpha-ribazole-5'-phosphate from nicotinate mononucleotide (NAMN) and 5,6-dimethylbenzimidazole (DMB). The polypeptide is Nicotinate-nucleotide--dimethylbenzimidazole phosphoribosyltransferase (Chloroflexus aggregans (strain MD-66 / DSM 9485)).